The chain runs to 281 residues: Octanoyl-[GcvH]:protein N-octanoyltransferase (281 aa).

The region spanning 44–250 (GESAATMRSW…TLQQFAPKLT (207 aa)) is the BPL/LPL catalytic domain. Catalysis depends on Cys149, which acts as the Acyl-thioester intermediate.

Belongs to the octanoyltransferase LipL family.

The enzyme catalyses N(6)-octanoyl-L-lysyl-[glycine-cleavage complex H protein] + L-lysyl-[lipoyl-carrier protein] = N(6)-octanoyl-L-lysyl-[lipoyl-carrier protein] + L-lysyl-[glycine-cleavage complex H protein]. It participates in protein modification; protein lipoylation via endogenous pathway; protein N(6)-(lipoyl)lysine from octanoyl-[acyl-carrier-protein]. In terms of biological role, catalyzes the amidotransfer (transamidation) of the octanoyl moiety from octanoyl-GcvH to the lipoyl domain of the E2 subunit of lipoate-dependent enzymes. In Bacillus anthracis, this protein is Octanoyl-[GcvH]:protein N-octanoyltransferase.